The sequence spans 438 residues: 3-phosphoshikimate 1-carboxyvinyltransferase (438 aa).

Positions 28, 29, and 33 each coordinate 3-phosphoshikimate. Lys28 is a binding site for phosphoenolpyruvate. The phosphoenolpyruvate site is built by Gly97 and Arg125. Residues Ser168, Ser169, Gln170, Glu316, and His343 each coordinate 3-phosphoshikimate. Position 170 (Gln170) interacts with phosphoenolpyruvate. The active-site Proton acceptor is the Glu316. Positions 347, 388, and 413 each coordinate phosphoenolpyruvate.

This sequence belongs to the EPSP synthase family. Monomer.

The protein localises to the cytoplasm. The catalysed reaction is 3-phosphoshikimate + phosphoenolpyruvate = 5-O-(1-carboxyvinyl)-3-phosphoshikimate + phosphate. Its pathway is metabolic intermediate biosynthesis; chorismate biosynthesis; chorismate from D-erythrose 4-phosphate and phosphoenolpyruvate: step 6/7. In terms of biological role, catalyzes the transfer of the enolpyruvyl moiety of phosphoenolpyruvate (PEP) to the 5-hydroxyl of shikimate-3-phosphate (S3P) to produce enolpyruvyl shikimate-3-phosphate and inorganic phosphate. The sequence is that of 3-phosphoshikimate 1-carboxyvinyltransferase from Rhodococcus jostii (strain RHA1).